A 159-amino-acid chain; its full sequence is Small ribosomal subunit protein uS7 (159 aa).

Belongs to the universal ribosomal protein uS7 family. As to quaternary structure, part of the 30S ribosomal subunit. Contacts proteins S9 and S11.

One of the primary rRNA binding proteins, it binds directly to 16S rRNA where it nucleates assembly of the head domain of the 30S subunit. Is located at the subunit interface close to the decoding center, probably blocks exit of the E-site tRNA. The sequence is that of Small ribosomal subunit protein uS7 from Rickettsia felis (strain ATCC VR-1525 / URRWXCal2) (Rickettsia azadi).